The sequence spans 269 residues: Regulatory protein RecX (269 aa).

Belongs to the RecX family.

The protein resides in the cytoplasm. Its function is as follows. Modulates RecA activity. This Listeria monocytogenes serotype 4a (strain HCC23) protein is Regulatory protein RecX.